Reading from the N-terminus, the 115-residue chain is C-type natriuretic peptide prohormone (115 aa).

The interval 24 to 49 (PSDELNNEAEEMSPAASLPELNADQS) is disordered. A disulfide bridge connects residues C99 and C115.

Belongs to the natriuretic peptide family. CNP-115 is differentially processed to produce CNP-38 and CNP-39 in the heart and CNP-22 in the brain.

The protein localises to the secreted. Hormone which may be vasoactive and natriuretic. Has a cGMP-stimulating activity. The protein is C-type natriuretic peptide prohormone of Scyliorhinus canicula (Small-spotted catshark).